The following is a 404-amino-acid chain: Glycerol-1-phosphate dehydrogenase [NAD(P)+] (404 aa).

Residues D55, 117–121 (GTVHD), and 139–142 (TAPS) contribute to the NAD(+) site. D144 serves as a coordination point for substrate. NAD(+) is bound at residue S148. D191 lines the substrate pocket. The Ni(2+) site is built by D191 and H271. H275 provides a ligand contact to substrate. H291 serves as a coordination point for Ni(2+).

It belongs to the glycerol-1-phosphate dehydrogenase family. As to quaternary structure, homodimer. The cofactor is Ni(2+).

The protein resides in the cytoplasm. It carries out the reaction sn-glycerol 1-phosphate + NAD(+) = dihydroxyacetone phosphate + NADH + H(+). The enzyme catalyses sn-glycerol 1-phosphate + NADP(+) = dihydroxyacetone phosphate + NADPH + H(+). Catalyzes the NAD(P)H-dependent reduction of dihydroxyacetonephosphate (DHAP or glycerone phosphate) to glycerol 1-phosphate (G1P). The G1P thus generated is probably used for the synthesis of phosphoglycerolipids in Gram-positive bacterial species. The sequence is that of Glycerol-1-phosphate dehydrogenase [NAD(P)+] from Geobacillus thermodenitrificans (strain NG80-2).